An 83-amino-acid chain; its full sequence is Cytochrome b559 subunit alpha (83 aa).

Residues 21–35 traverse the membrane as a helical segment; sequence VIHSITIPSLFIAGW. His23 lines the heme pocket.

This sequence belongs to the PsbE/PsbF family. In terms of assembly, heterodimer of an alpha subunit and a beta subunit. PSII is composed of 1 copy each of membrane proteins PsbA, PsbB, PsbC, PsbD, PsbE, PsbF, PsbH, PsbI, PsbJ, PsbK, PsbL, PsbM, PsbT, PsbX, PsbY, PsbZ, Psb30/Ycf12, at least 3 peripheral proteins of the oxygen-evolving complex and a large number of cofactors. It forms dimeric complexes. It depends on heme b as a cofactor.

Its subcellular location is the plastid. The protein localises to the chloroplast thylakoid membrane. In terms of biological role, this b-type cytochrome is tightly associated with the reaction center of photosystem II (PSII). PSII is a light-driven water:plastoquinone oxidoreductase that uses light energy to abstract electrons from H(2)O, generating O(2) and a proton gradient subsequently used for ATP formation. It consists of a core antenna complex that captures photons, and an electron transfer chain that converts photonic excitation into a charge separation. This is Cytochrome b559 subunit alpha from Zygnema circumcarinatum (Green alga).